Here is a 513-residue protein sequence, read N- to C-terminus: GMP synthase [glutamine-hydrolyzing] (513 aa).

Positions 5–195 (LVLVIDFGGQ…VYNICGCTGD (191 aa)) constitute a Glutamine amidotransferase type-1 domain. The active-site Nucleophile is the Cys82. Catalysis depends on residues His169 and Glu171. The GMPS ATP-PPase domain maps to 196–388 (WKMDSFVEKT…LGIPEKLVFR (193 aa)). 223 to 229 (SGGVDSS) contributes to the ATP binding site.

In terms of assembly, homodimer.

It carries out the reaction XMP + L-glutamine + ATP + H2O = GMP + L-glutamate + AMP + diphosphate + 2 H(+). Its pathway is purine metabolism; GMP biosynthesis; GMP from XMP (L-Gln route): step 1/1. Catalyzes the synthesis of GMP from XMP. In Clostridium botulinum (strain Eklund 17B / Type B), this protein is GMP synthase [glutamine-hydrolyzing].